The primary structure comprises 524 residues: Peptide chain release factor 3 (524 aa).

The tr-type G domain maps to 8 to 276; sequence NKRRTFAIIS…GFAKYAPAPE (269 aa). GTP is bound by residues 17–24, 85–89, and 139–142; these read SHPDAGKT, DTPGH, and NKLD.

This sequence belongs to the TRAFAC class translation factor GTPase superfamily. Classic translation factor GTPase family. PrfC subfamily.

The protein resides in the cytoplasm. In terms of biological role, increases the formation of ribosomal termination complexes and stimulates activities of RF-1 and RF-2. It binds guanine nucleotides and has strong preference for UGA stop codons. It may interact directly with the ribosome. The stimulation of RF-1 and RF-2 is significantly reduced by GTP and GDP, but not by GMP. The polypeptide is Peptide chain release factor 3 (Hydrogenovibrio crunogenus (strain DSM 25203 / XCL-2) (Thiomicrospira crunogena)).